The following is a 290-amino-acid chain: MEADLEVQSELEKDTIPIKIGIIGEANLDKPIYLAERMEYAVCTPFGKPSDVIIDGQIEGVNVCLLSRNGRNHDIMPSNINYRANVWAMRKMGCTHILVTNTFSSLRDTFQPGHLVVPNDVIDYTSRRAQTFYDGAVGSPLGVCHVPMNPTFCERTRQHLLSAAEELGFPTGSSGTVLTLEGPRYSTVAENNMFRKWGADLLSMTLCPEAILAKEAGIPYASLGLVTNMECWCAKQPNATTHEIIYIFKKQSENLQKVLITAIRNMAAEDWAEDILKAKILVCSNFANSK.

68–69 is a phosphate binding site; the sequence is RN. Residue M204 coordinates substrate. T205 contributes to the phosphate binding site.

The protein belongs to the PNP/MTAP phosphorylase family. MTAP subfamily. As to quaternary structure, homotrimer.

The protein resides in the cytoplasm. It is found in the nucleus. It catalyses the reaction a purine D-ribonucleoside + phosphate = a purine nucleobase + alpha-D-ribose 1-phosphate. It participates in purine metabolism; purine nucleoside salvage. In terms of biological role, purine nucleoside phosphorylase involved in purine salvage. This chain is Purine nucleoside phosphorylase, found in Drosophila melanogaster (Fruit fly).